Consider the following 196-residue polypeptide: Signaling threshold-regulating transmembrane adapter 1 (196 aa).

The N-terminal stretch at 1 to 24 (MNQADPRLRAVCLWTLTSAAMSRG) is a signal peptide. Over 25 to 40 (DNCTDLLALGIPSITQ) the chain is Extracellular. N-linked (GlcNAc...) asparagine glycosylation is present at asparagine 26. A helical transmembrane segment spans residues 41 to 61 (AWGLWVLLGAVTLLFLISLAA). Over 62–196 (HLSQWTRGRS…AYANSQPAAS (135 aa)) the chain is Cytoplasmic. 2 positions are modified to phosphoserine: serine 80 and serine 83. At tyrosine 90 the chain carries Phosphotyrosine. The tract at residues 90 to 93 (YGNL) is interaction with GRB2. Serine 102 is subject to Phosphoserine. Tyrosine 127 is subject to Phosphotyrosine. The disordered stretch occupies residues 132–167 (LRPPQGRIPGPGTPVKYSEVVLDSEPKSQASGPEPE). Threonine 144 bears the Phosphothreonine mark. An interaction with PTPN11 region spans residues 146 to 151 (VKYSEV). Phosphotyrosine occurs at positions 148 and 169. Positions 169 to 172 (YASV) are interaction with CSK. The residue at position 182 (serine 182) is a Phosphoserine. Tyrosine 188 carries the phosphotyrosine modification. Residues 188–191 (YANS) form an interaction with GRB2 region.

In terms of assembly, homodimer; disulfide-linked. When phosphorylated, interacts with PTPN11/SHP2, GRB2 and CSK. In terms of processing, phosphorylated on tyrosines by LCK, FYN or ZAP70 upon TCR activation; which leads to the recruitment of PTPN11, GRB2 and CSK. In terms of tissue distribution, specifically expressed in T- and B-cells. Present in plasma cells but not in germinal center B-cells (at protein level). Expressed in T- and B-cell lymphoma.

The protein resides in the cell membrane. Functionally, negatively regulates TCR (T-cell antigen receptor)-mediated signaling in T-cells. Involved in positive selection of T-cells. The protein is Signaling threshold-regulating transmembrane adapter 1 (SIT1) of Homo sapiens (Human).